The following is a 415-amino-acid chain: Transcription termination factor Rho (415 aa).

Residues 52-119 (ADIASGVLDI…TDVVRVNGRT (68 aa)) form the Rho RNA-BD domain. ATP is bound by residues 161-166 (GKGQRG), 173-178 (KTGKTV), and Arg-204.

This sequence belongs to the Rho family. Homohexamer. The homohexamer assembles into an open ring structure.

Its function is as follows. Facilitates transcription termination by a mechanism that involves Rho binding to the nascent RNA, activation of Rho's RNA-dependent ATPase activity, and release of the mRNA from the DNA template. The sequence is that of Transcription termination factor Rho from Streptomyces coelicolor (strain ATCC BAA-471 / A3(2) / M145).